The primary structure comprises 160 residues: Cytochrome b6-f complex subunit 4 (160 aa).

The next 3 helical transmembrane spans lie at 36 to 56 (LLYI…GLAI), 95 to 115 (LLGV…PFLE), and 131 to 151 (TVFL…TLPI).

Belongs to the cytochrome b family. PetD subfamily. In terms of assembly, the 4 large subunits of the cytochrome b6-f complex are cytochrome b6, subunit IV (17 kDa polypeptide, petD), cytochrome f and the Rieske protein, while the 4 small subunits are petG, petL, petM and petN. The complex functions as a dimer.

It localises to the plastid. It is found in the chloroplast thylakoid membrane. Its function is as follows. Component of the cytochrome b6-f complex, which mediates electron transfer between photosystem II (PSII) and photosystem I (PSI), cyclic electron flow around PSI, and state transitions. The polypeptide is Cytochrome b6-f complex subunit 4 (Acorus calamus (Sweet flag)).